We begin with the raw amino-acid sequence, 376 residues long: Heat stress transcription factor A-2a (376 aa).

Residues 137–168 form a disordered region; that stretch reads LKTIKRRRPPPSSPPSSSSSSSSSQHQQQPAA. A compositionally biased stretch (low complexity) spans 151 to 160; sequence PSSSSSSSSS. The stretch at 182 to 229 forms a coiled coil; it reads VNRLQRDKSVLIAEVVKLRQEQQTTRAQMQAMEERISAAEQKQQQMTV. The interval 185 to 235 is hydrophobic repeat HR-A/B; the sequence is LQRDKSVLIAEVVKLRQEQQTTRAQMQAMEERISAAEQKQQQMTVFLARAM. The short motif at 265 to 269 is the Nuclear localization signal element; the sequence is KKRRR. 2 disordered regions span residues 296-319 and 332-362; these read VAEPDGDTTPRGDGGGGGGGDTES and KQREDGVAGGVQESNSGGADVDNDEEDDDDD. Positions 307-316 are enriched in gly residues; the sequence is GDGGGGGGGD. The short motif at 318-325 is the AHA element; that stretch reads ESFWMQLL. The span at 352-362 shows a compositional bias: acidic residues; the sequence is VDNDEEDDDDD. A Nuclear export signal motif is present at residues 366–373; sequence LVQSIYHL.

It belongs to the HSF family. Class A subfamily. As to quaternary structure, homotrimer. Exhibits temperature-dependent phosphorylation.

The protein localises to the cytoplasm. Its subcellular location is the nucleus. Its function is as follows. Transcriptional regulator that specifically binds DNA of heat shock promoter elements (HSE). The sequence is that of Heat stress transcription factor A-2a (HSFA2A) from Oryza sativa subsp. japonica (Rice).